Consider the following 442-residue polypeptide: Trigger factor (442 aa).

In terms of domain architecture, PPIase FKBP-type spans G163–A248.

Belongs to the FKBP-type PPIase family. Tig subfamily.

The protein localises to the cytoplasm. The catalysed reaction is [protein]-peptidylproline (omega=180) = [protein]-peptidylproline (omega=0). Functionally, involved in protein export. Acts as a chaperone by maintaining the newly synthesized protein in an open conformation. Functions as a peptidyl-prolyl cis-trans isomerase. The protein is Trigger factor of Dinoroseobacter shibae (strain DSM 16493 / NCIMB 14021 / DFL 12).